A 266-amino-acid polypeptide reads, in one-letter code: Aspartate/glutamate leucyltransferase (266 aa).

This sequence belongs to the R-transferase family. Bpt subfamily.

The protein localises to the cytoplasm. The enzyme catalyses N-terminal L-glutamyl-[protein] + L-leucyl-tRNA(Leu) = N-terminal L-leucyl-L-glutamyl-[protein] + tRNA(Leu) + H(+). The catalysed reaction is N-terminal L-aspartyl-[protein] + L-leucyl-tRNA(Leu) = N-terminal L-leucyl-L-aspartyl-[protein] + tRNA(Leu) + H(+). Functions in the N-end rule pathway of protein degradation where it conjugates Leu from its aminoacyl-tRNA to the N-termini of proteins containing an N-terminal aspartate or glutamate. This Rhizorhabdus wittichii (strain DSM 6014 / CCUG 31198 / JCM 15750 / NBRC 105917 / EY 4224 / RW1) (Sphingomonas wittichii) protein is Aspartate/glutamate leucyltransferase.